The primary structure comprises 91 residues: DNA-directed RNA polymerase subunit omega (91 aa).

This sequence belongs to the RNA polymerase subunit omega family. In terms of assembly, the RNAP catalytic core consists of 2 alpha, 1 beta, 1 beta' and 1 omega subunit. When a sigma factor is associated with the core the holoenzyme is formed, which can initiate transcription.

The catalysed reaction is RNA(n) + a ribonucleoside 5'-triphosphate = RNA(n+1) + diphosphate. Functionally, promotes RNA polymerase assembly. Latches the N- and C-terminal regions of the beta' subunit thereby facilitating its interaction with the beta and alpha subunits. The protein is DNA-directed RNA polymerase subunit omega of Pectobacterium atrosepticum (strain SCRI 1043 / ATCC BAA-672) (Erwinia carotovora subsp. atroseptica).